A 166-amino-acid chain; its full sequence is Phosphopantetheine adenylyltransferase (166 aa).

Ser-11 contacts substrate. ATP contacts are provided by residues 11 to 12 (SF) and His-19. Positions 43, 76, and 90 each coordinate substrate. Residues 91–93 (GLR), Glu-101, and 126–132 (YRYFSSS) each bind ATP.

Belongs to the bacterial CoaD family. As to quaternary structure, homohexamer. It depends on Mg(2+) as a cofactor.

It localises to the cytoplasm. It catalyses the reaction (R)-4'-phosphopantetheine + ATP + H(+) = 3'-dephospho-CoA + diphosphate. It functions in the pathway cofactor biosynthesis; coenzyme A biosynthesis; CoA from (R)-pantothenate: step 4/5. Its function is as follows. Reversibly transfers an adenylyl group from ATP to 4'-phosphopantetheine, yielding dephospho-CoA (dPCoA) and pyrophosphate. This Streptococcus mutans serotype c (strain ATCC 700610 / UA159) protein is Phosphopantetheine adenylyltransferase.